Consider the following 105-residue polypeptide: Small ribosomal subunit protein uS10c (105 aa).

The protein belongs to the universal ribosomal protein uS10 family. In terms of assembly, part of the 30S ribosomal subunit.

It is found in the plastid. It localises to the chloroplast. Its function is as follows. Involved in the binding of tRNA to the ribosomes. The chain is Small ribosomal subunit protein uS10c from Pyropia yezoensis (Susabi-nori).